A 1644-amino-acid chain; its full sequence is Terminal uridylyltransferase 4 (1644 aa).

Disordered stretches follow at residues 31–63 (NQTL…QNDI), 96–168 (CKAK…SLLL), and 205–257 (ALQN…EMDY). Residues 36–46 (ARNDKSVKEIE) show a composition bias toward basic and acidic residues. The residue at position 104 (serine 104) is a Phosphoserine. Polar residues predominate over residues 112-125 (TISQAKSEKATSLQ). Phosphoserine occurs at positions 134 and 156. Residues 206-222 (LQNSPRSQKQQTCTDNT) show a composition bias toward polar residues. Positions 238-252 (DLSKMKNDESNKENS) are enriched in basic and acidic residues. Residues 253 to 333 (SEMDYLENAT…KEKRHKKNIL (81 aa)) are required for interaction with LIN28A and pre-let-7 RNA. The Zn(2+) site is built by cysteine 306, cysteine 309, histidine 322, and histidine 328. Residues 579-617 (EKNSIAEENKAKADQPKDDTKKTETDNQSNAMKEKHGKS) form a disordered region. A compositionally biased stretch (basic and acidic residues) spans 582–603 (SIAEENKAKADQPKDDTKKTET). The region spanning 628–678 (SLGQLWLELLKFYTLDFALEEYVICVRIQDILTRENKNWPKRRIAIEDPFS) is the PAP-associated 1 domain. The tract at residues 794 to 816 (GQDSSSLSTSKSSEIEPKLDKKQ) is disordered. The segment covering 806-816 (SEIEPKLDKKQ) has biased composition (basic and acidic residues). The segment at 901–1634 (DKFILTSGKP…CATRRCRERC (734 aa)) is sufficient for monouridylation activity. The segment at 913–930 (IVCSICKKDGHSKNDCPE) adopts a CCHC-type 1 zinc-finger fold. UTP is bound by residues 998-1001 (SSKN), 1008-1011 (SDLD), asparagine 1081, lysine 1103, 1121-1125 (SYAYI), and histidine 1237. Residues aspartate 1009 and aspartate 1011 each coordinate Mg(2+). Residues 1184-1237 (SLGELWLGLLRFYTEEFDFKEYVISIRQKKLLTTFEKQWTSKCIAIEDPFDLNH) form the PAP-associated 2 domain. The segment at 1293–1310 (RCCRVCGKIGHYMKDCPK) adopts a CCHC-type 2 zinc-finger fold. Residues 1321-1348 (KDSEEEKEGNEEEKDSRDVLDPRDLHDT) form a disordered region. A compositionally biased stretch (basic and acidic residues) spans 1334–1348 (KDSRDVLDPRDLHDT). The CCHC-type 3 zinc-finger motif lies at 1357-1374 (LRCFICGDAGHVRRECPE). The span at 1401-1426 (AGSAQQQGDQSIRTRQSSECSESPSY) shows a compositional bias: low complexity. Positions 1401–1482 (AGSAQQQGDQ…LYNFPQSPPA (82 aa)) are disordered. Positions 1441–1452 (AAITQPSSQPGS) are enriched in polar residues. Residues 1453 to 1470 (QPKLGPPQQGAQPPHQVQ) show a composition bias toward low complexity. An Omega-N-methylarginine modification is found at arginine 1624.

It belongs to the DNA polymerase type-B-like family. Interacts with LIN28A in the presence of pre-let-7 RNA. Interacts with T2BP. Interacts with MOV10; the interaction is RNA-dependent. Mg(2+) is required as a cofactor. Mn(2+) serves as cofactor.

The protein resides in the nucleus. It localises to the cytoplasm. It is found in the cytoplasmic ribonucleoprotein granule. It catalyses the reaction RNA(n) + UTP = RNA(n)-3'-uridine ribonucleotide + diphosphate. Functionally, uridylyltransferase that mediates the terminal uridylation of mRNAs with short (less than 25 nucleotides) poly(A) tails, hence facilitating global mRNA decay. Essential for both oocyte maturation and fertility. Through 3' terminal uridylation of mRNA, sculpts, with TUT7, the maternal transcriptome by eliminating transcripts during oocyte growth. Involved in microRNA (miRNA)-induced gene silencing through uridylation of deadenylated miRNA targets. Also functions as an integral regulator of microRNA biogenesis using 3 different uridylation mechanisms. Acts as a suppressor of miRNA biogenesis by mediating the terminal uridylation of some miRNA precursors, including that of let-7 (pre-let-7), miR107, miR-143 and miR-200c. Uridylated miRNAs are not processed by Dicer and undergo degradation. Degradation of pre-let-7 contributes to the maintenance of embryonic stem (ES) cell pluripotency. Also catalyzes the 3' uridylation of miR-26A, a miRNA that targets IL6 transcript. This abrogates the silencing of IL6 transcript, hence promoting cytokine expression. In the absence of LIN28A, TUT7 and TUT4 monouridylate group II pre-miRNAs, which includes most of pre-let7 members, that shapes an optimal 3' end overhang for efficient processing. Adds oligo-U tails to truncated pre-miRNAS with a 5' overhang which may promote rapid degradation of non-functional pre-miRNA species. May also suppress Toll-like receptor-induced NF-kappa-B activation via binding to T2BP. Does not play a role in replication-dependent histone mRNA degradation. Due to functional redundancy between TUT4 and TUT7, the identification of the specific role of each of these proteins is difficult. TUT4 and TUT7 restrict retrotransposition of long interspersed element-1 (LINE-1) in cooperation with MOV10 counteracting the RNA chaperonne activity of L1RE1. TUT7 uridylates LINE-1 mRNAs in the cytoplasm which inhibits initiation of reverse transcription once in the nucleus, whereas uridylation by TUT4 destabilizes mRNAs in cytoplasmic ribonucleoprotein granules. This Homo sapiens (Human) protein is Terminal uridylyltransferase 4.